A 168-amino-acid chain; its full sequence is Pheromone-binding protein (168 aa).

Positions 1 to 26 (MNKTTTKMKVAVVAIVVYLAVGNVDS) are cleaved as a signal peptide. 3 cysteine pairs are disulfide-bonded: C45–C80, C76–C134, and C123–C143.

It belongs to the PBP/GOBP family. As to quaternary structure, homodimer. Antenna.

In terms of biological role, this major soluble protein in olfactory sensilla of male moths might serve to solubilize the extremely hydrophobic pheromone molecules and to transport pheromone through the aqueous lymph to receptors located on olfactory cilia. PBP is also found in sensilla from female M.sexta antennae. This chain is Pheromone-binding protein, found in Manduca sexta (Tobacco hawkmoth).